The sequence spans 508 residues: Photosystem II CP47 reaction center protein (508 aa).

6 helical membrane passes run 21 to 36 (SVHI…WAGS), 101 to 115 (IVFS…IWHW), 140 to 156 (GIHL…FGAF), 203 to 218 (IAAG…FHLS), 237 to 252 (VLSS…AFVV), and 457 to 472 (SFAL…HGAR).

This sequence belongs to the PsbB/PsbC family. PsbB subfamily. PSII is composed of 1 copy each of membrane proteins PsbA, PsbB, PsbC, PsbD, PsbE, PsbF, PsbH, PsbI, PsbJ, PsbK, PsbL, PsbM, PsbT, PsbX, PsbY, PsbZ, Psb30/Ycf12, at least 3 peripheral proteins of the oxygen-evolving complex and a large number of cofactors. It forms dimeric complexes. Binds multiple chlorophylls. PSII binds additional chlorophylls, carotenoids and specific lipids. is required as a cofactor.

It localises to the plastid. Its subcellular location is the chloroplast thylakoid membrane. In terms of biological role, one of the components of the core complex of photosystem II (PSII). It binds chlorophyll and helps catalyze the primary light-induced photochemical processes of PSII. PSII is a light-driven water:plastoquinone oxidoreductase, using light energy to abstract electrons from H(2)O, generating O(2) and a proton gradient subsequently used for ATP formation. This is Photosystem II CP47 reaction center protein from Gossypium hirsutum (Upland cotton).